Consider the following 444-residue polypeptide: Methylenetetrahydrofolate--tRNA-(uracil-5-)-methyltransferase TrmFO (444 aa).

Gly-10–Gly-15 is an FAD binding site.

The protein belongs to the MnmG family. TrmFO subfamily. FAD serves as cofactor.

It is found in the cytoplasm. The enzyme catalyses uridine(54) in tRNA + (6R)-5,10-methylene-5,6,7,8-tetrahydrofolate + NADH + H(+) = 5-methyluridine(54) in tRNA + (6S)-5,6,7,8-tetrahydrofolate + NAD(+). It carries out the reaction uridine(54) in tRNA + (6R)-5,10-methylene-5,6,7,8-tetrahydrofolate + NADPH + H(+) = 5-methyluridine(54) in tRNA + (6S)-5,6,7,8-tetrahydrofolate + NADP(+). Its function is as follows. Catalyzes the folate-dependent formation of 5-methyl-uridine at position 54 (M-5-U54) in all tRNAs. The protein is Methylenetetrahydrofolate--tRNA-(uracil-5-)-methyltransferase TrmFO of Streptococcus pneumoniae serotype 2 (strain D39 / NCTC 7466).